The following is a 243-amino-acid chain: 1-(5-phosphoribosyl)-5-[(5-phosphoribosylamino)methylideneamino] imidazole-4-carboxamide isomerase (243 aa).

Asp8 functions as the Proton acceptor in the catalytic mechanism. Catalysis depends on Asp130, which acts as the Proton donor.

It belongs to the HisA/HisF family.

The protein localises to the cytoplasm. It catalyses the reaction 1-(5-phospho-beta-D-ribosyl)-5-[(5-phospho-beta-D-ribosylamino)methylideneamino]imidazole-4-carboxamide = 5-[(5-phospho-1-deoxy-D-ribulos-1-ylimino)methylamino]-1-(5-phospho-beta-D-ribosyl)imidazole-4-carboxamide. It functions in the pathway amino-acid biosynthesis; L-histidine biosynthesis; L-histidine from 5-phospho-alpha-D-ribose 1-diphosphate: step 4/9. This chain is 1-(5-phosphoribosyl)-5-[(5-phosphoribosylamino)methylideneamino] imidazole-4-carboxamide isomerase, found in Vesicomyosocius okutanii subsp. Calyptogena okutanii (strain HA).